Reading from the N-terminus, the 38-residue chain is Large ribosomal subunit protein bL36 (38 aa).

The protein belongs to the bacterial ribosomal protein bL36 family.

This Chloroherpeton thalassium (strain ATCC 35110 / GB-78) protein is Large ribosomal subunit protein bL36.